Reading from the N-terminus, the 538-residue chain is Thermosome subunit beta (538 aa).

The interval 518–538 is disordered; the sequence is SSGSSEEGMEEMGGMGGMPPM. Residues 528–538 show a composition bias toward gly residues; sequence EMGGMGGMPPM.

The protein belongs to the TCP-1 chaperonin family. Forms a Heterooligomeric complex of two stacked eight-membered rings.

Its function is as follows. Molecular chaperone; binds unfolded polypeptides in vitro, and has a weak ATPase activity. The chain is Thermosome subunit beta (thsB) from Methanothermobacter thermautotrophicus (strain ATCC 29096 / DSM 1053 / JCM 10044 / NBRC 100330 / Delta H) (Methanobacterium thermoautotrophicum).